We begin with the raw amino-acid sequence, 91 residues long: Cytochrome b-c1 complex subunit 6, mitochondrial (91 aa).

A mitochondrion-targeting transit peptide spans 1 to 13 (MGLEDEQKMLTES). A disordered region spans residues 1 to 30 (MGLEDEQKMLTESGDPEEEEEEEEELVDPL). The segment covering 14–27 (GDPEEEEEEEEELV) has biased composition (acidic residues). Disulfide bonds link Cys37–Cys81 and Cys53–Cys67. Lys42 bears the N6-acetyllysine mark. N6-acetyllysine is present on Lys85.

This sequence belongs to the UQCRH/QCR6 family. As to quaternary structure, component of the ubiquinol-cytochrome c oxidoreductase (cytochrome b-c1 complex, complex III, CIII), a multisubunit enzyme composed of 11 subunits. The complex is composed of 3 respiratory subunits cytochrome b, cytochrome c1 and Rieske protein UQCRFS1, 2 core protein subunits UQCRC1/QCR1 and UQCRC2/QCR2, and 6 low-molecular weight protein subunits UQCRH/QCR6, UQCRB/QCR7, UQCRQ/QCR8, UQCR10/QCR9, UQCR11/QCR10 and subunit 9, the cleavage product of Rieske protein UQCRFS1. The complex exists as an obligatory dimer and forms supercomplexes (SCs) in the inner mitochondrial membrane with NADH-ubiquinone oxidoreductase (complex I, CI) and cytochrome c oxidase (complex IV, CIV), resulting in different assemblies (supercomplex SCI(1)III(2)IV(1) and megacomplex MCI(2)III(2)IV(2)).

It localises to the mitochondrion inner membrane. Functionally, component of the ubiquinol-cytochrome c oxidoreductase, a multisubunit transmembrane complex that is part of the mitochondrial electron transport chain which drives oxidative phosphorylation. The respiratory chain contains 3 multisubunit complexes succinate dehydrogenase (complex II, CII), ubiquinol-cytochrome c oxidoreductase (cytochrome b-c1 complex, complex III, CIII) and cytochrome c oxidase (complex IV, CIV), that cooperate to transfer electrons derived from NADH and succinate to molecular oxygen, creating an electrochemical gradient over the inner membrane that drives transmembrane transport and the ATP synthase. The cytochrome b-c1 complex catalyzes electron transfer from ubiquinol to cytochrome c, linking this redox reaction to translocation of protons across the mitochondrial inner membrane, with protons being carried across the membrane as hydrogens on the quinol. In the process called Q cycle, 2 protons are consumed from the matrix, 4 protons are released into the intermembrane space and 2 electrons are passed to cytochrome c. The polypeptide is Cytochrome b-c1 complex subunit 6, mitochondrial (UQCRH) (Homo sapiens (Human)).